The sequence spans 348 residues: Anthranilate phosphoribosyltransferase (348 aa).

Residues Gly-89, 92-93, Thr-97, 99-102, 117-125, and Ser-129 each bind 5-phospho-alpha-D-ribose 1-diphosphate; these read GD, NIST, and KHGNRSASS. Gly-89 lines the anthranilate pocket. Ser-101 provides a ligand contact to Mg(2+). Asn-120 is a binding site for anthranilate. Residue Arg-175 coordinates anthranilate. 2 residues coordinate Mg(2+): Asp-234 and Glu-235.

It belongs to the anthranilate phosphoribosyltransferase family. In terms of assembly, homodimer. Requires Mg(2+) as cofactor.

The enzyme catalyses N-(5-phospho-beta-D-ribosyl)anthranilate + diphosphate = 5-phospho-alpha-D-ribose 1-diphosphate + anthranilate. The protein operates within amino-acid biosynthesis; L-tryptophan biosynthesis; L-tryptophan from chorismate: step 2/5. Its function is as follows. Catalyzes the transfer of the phosphoribosyl group of 5-phosphorylribose-1-pyrophosphate (PRPP) to anthranilate to yield N-(5'-phosphoribosyl)-anthranilate (PRA). The protein is Anthranilate phosphoribosyltransferase of Synechocystis sp. (strain ATCC 27184 / PCC 6803 / Kazusa).